The sequence spans 566 residues: UvrABC system protein C (566 aa).

One can recognise a GIY-YIG domain in the interval 16 to 93 (EKPGVYLFKK…IQQYKPRYNV (78 aa)). A UVR domain is found at 199–234 (AEVLPKLYEKIEEFSKELMFEKCAHIRDQIIALENL).

The protein belongs to the UvrC family. In terms of assembly, interacts with UvrB in an incision complex.

The protein localises to the cytoplasm. Its function is as follows. The UvrABC repair system catalyzes the recognition and processing of DNA lesions. UvrC both incises the 5' and 3' sides of the lesion. The N-terminal half is responsible for the 3' incision and the C-terminal half is responsible for the 5' incision. The chain is UvrABC system protein C from Aquifex aeolicus (strain VF5).